The following is a 215-amino-acid chain: 3-isopropylmalate dehydratase small subunit (215 aa).

This sequence belongs to the LeuD family. LeuD type 1 subfamily. In terms of assembly, heterodimer of LeuC and LeuD.

The enzyme catalyses (2R,3S)-3-isopropylmalate = (2S)-2-isopropylmalate. It functions in the pathway amino-acid biosynthesis; L-leucine biosynthesis; L-leucine from 3-methyl-2-oxobutanoate: step 2/4. Its function is as follows. Catalyzes the isomerization between 2-isopropylmalate and 3-isopropylmalate, via the formation of 2-isopropylmaleate. The chain is 3-isopropylmalate dehydratase small subunit from Polynucleobacter necessarius subsp. necessarius (strain STIR1).